Here is a 315-residue protein sequence, read N- to C-terminus: Homeobox-leucine zipper protein HAT3 (315 aa).

The tract at residues 140–163 is disordered; sequence SCSLGGGSDDEDGSGNGDDSSRKK. The segment at residues 159-218 is a DNA-binding region (homeobox); it reads SSRKKLRLSKEQALVLEETFKEHSTLNPKQKMALAKQLNLRTRQVEVWFQNRRARTKLKQ. The interval 226–247 is leucine-zipper; that stretch reads LKRCCENLTDENRRLQKEVSEL. Residues 280 to 305 show a composition bias toward low complexity; it reads SSSSVAPPVMNSSSPMGPMSPWAAMP. The disordered stretch occupies residues 280–315; sequence SSSSVAPPVMNSSSPMGPMSPWAAMPLRQRPAAGSH.

It belongs to the HD-ZIP homeobox family. Class II subfamily.

The protein resides in the nucleus. Functionally, probable transcription factor. In Arabidopsis thaliana (Mouse-ear cress), this protein is Homeobox-leucine zipper protein HAT3 (HAT3).